We begin with the raw amino-acid sequence, 184 residues long: dCTP deaminase (184 aa).

DCTP contacts are provided by residues 107–112 (KSTYAR), 131–133 (TLE), Gln-152, Tyr-166, and Gln-176. Glu-133 acts as the Proton donor/acceptor in catalysis.

The protein belongs to the dCTP deaminase family. In terms of assembly, homotrimer.

The catalysed reaction is dCTP + H2O + H(+) = dUTP + NH4(+). It participates in pyrimidine metabolism; dUMP biosynthesis; dUMP from dCTP (dUTP route): step 1/2. Its function is as follows. Catalyzes the deamination of dCTP to dUTP. The chain is dCTP deaminase from Rhizorhabdus wittichii (strain DSM 6014 / CCUG 31198 / JCM 15750 / NBRC 105917 / EY 4224 / RW1) (Sphingomonas wittichii).